The following is a 179-amino-acid chain: Large ribosomal subunit protein uL5 (179 aa).

This sequence belongs to the universal ribosomal protein uL5 family. In terms of assembly, part of the 50S ribosomal subunit; part of the 5S rRNA/L5/L18/L25 subcomplex. Contacts the 5S rRNA and the P site tRNA. Forms a bridge to the 30S subunit in the 70S ribosome.

Its function is as follows. This is one of the proteins that bind and probably mediate the attachment of the 5S RNA into the large ribosomal subunit, where it forms part of the central protuberance. In the 70S ribosome it contacts protein S13 of the 30S subunit (bridge B1b), connecting the 2 subunits; this bridge is implicated in subunit movement. Contacts the P site tRNA; the 5S rRNA and some of its associated proteins might help stabilize positioning of ribosome-bound tRNAs. This chain is Large ribosomal subunit protein uL5, found in Caldanaerobacter subterraneus subsp. tengcongensis (strain DSM 15242 / JCM 11007 / NBRC 100824 / MB4) (Thermoanaerobacter tengcongensis).